An 85-amino-acid polypeptide reads, in one-letter code: UPF0181 protein YPTS_1774 (85 aa).

Over residues 57-72 (DHDFDEHTESDYRRDD) the composition is skewed to basic and acidic residues. Positions 57–85 (DHDFDEHTESDYRRDDEPDADDIEDLYEG) are disordered. Residues 73–85 (EPDADDIEDLYEG) are compositionally biased toward acidic residues.

Belongs to the UPF0181 family.

This chain is UPF0181 protein YPTS_1774, found in Yersinia pseudotuberculosis serotype IB (strain PB1/+).